The primary structure comprises 379 residues: Anhydro-N-acetylmuramic acid kinase (379 aa).

9-16 serves as a coordination point for ATP; the sequence is GTSADGVD.

It belongs to the anhydro-N-acetylmuramic acid kinase family.

It catalyses the reaction 1,6-anhydro-N-acetyl-beta-muramate + ATP + H2O = N-acetyl-D-muramate 6-phosphate + ADP + H(+). Its pathway is amino-sugar metabolism; 1,6-anhydro-N-acetylmuramate degradation. The protein operates within cell wall biogenesis; peptidoglycan recycling. Its function is as follows. Catalyzes the specific phosphorylation of 1,6-anhydro-N-acetylmuramic acid (anhMurNAc) with the simultaneous cleavage of the 1,6-anhydro ring, generating MurNAc-6-P. Is required for the utilization of anhMurNAc either imported from the medium or derived from its own cell wall murein, and thus plays a role in cell wall recycling. The polypeptide is Anhydro-N-acetylmuramic acid kinase (Synechococcus sp. (strain CC9605)).